Reading from the N-terminus, the 492-residue chain is Tumor necrosis factor receptor superfamily member 8 (492 aa).

An N-terminal signal peptide occupies residues 1–18; that stretch reads MSILLKAAGLLFLGMLQA. The Extracellular portion of the chain corresponds to 19-282; it reads FPKDRPLDTT…STGTPFLDPG (264 aa). 2 TNFR-Cys repeats span residues 57–104 and 105–141; these read PCPQ…PRIC and ECQP…NTIC. 4 cysteine pairs are disulfide-bonded: Cys58–Cys80, Cys83–Cys96, Cys86–Cys104, and Cys123–Cys141. Residues 141–178 are disordered; that stretch reads CDLPSPGSGPNGSNPDDCKTLTSHTTPQAIPTLESPAN. Positions 144-155 are enriched in low complexity; the sequence is PSPGSGPNGSNP. N-linked (GlcNAc...) asparagine glycans are attached at residues Asn151, Asn178, and Asn224. Residues 160–178 are compositionally biased toward polar residues; the sequence is TLTSHTTPQAIPTLESPAN. A helical transmembrane segment spans residues 283-303; that stretch reads SMLFWVAMVVLLVGSASFLLC. Residues 304 to 492 lie on the Cytoplasmic side of the membrane; it reads YWKACRRRFQ…DHEPTTVSEK (189 aa). Residues Ser334 and Ser348 each carry the phosphoserine modification. Disordered regions lie at residues 336–366 and 432–492; these read PTEK…PPAV and PEGR…VSEK. A compositionally biased stretch (polar residues) spans 339–360; the sequence is KLTQLQRSGSVTDSSAGHTLSP. Basic and acidic residues-rich tracts occupy residues 450 to 459 and 478 to 492; these read EVDHTPHYPE and EGGK…VSEK.

This sequence belongs to the TNFR8 family. As to quaternary structure, interacts with TRAF1, TRAF2, TRAF3 and TRAF5. As to expression, very low level of expression. Detected in spleen, thymus and lung. Highly expressed in HTLV-1 infected T-cell lines.

It is found in the cell membrane. Its function is as follows. Receptor for TNFSF8/CD30L. May play a role in the regulation of cellular growth and transformation of activated lymphoblasts. Regulates gene expression through activation of NF-kappa-B. The sequence is that of Tumor necrosis factor receptor superfamily member 8 from Rattus norvegicus (Rat).